A 482-amino-acid polypeptide reads, in one-letter code: Nuclear transcription factor Y subunit nfya-1 (482 aa).

Residues 1–160 (MNGASRGDVQ…NGSYIQYNEP (160 aa)) are disordered. Over residues 72–93 (SSPNVQTQCHQPPVVRSQTHQA) the composition is skewed to polar residues. Residues 94–110 (SVSQTTPTQTTPSQYTP) show a composition bias toward low complexity. Composition is skewed to polar residues over residues 126–135 (HVTPSQQQRI) and 144–160 (VSQS…YNEP). The Subunit association domain (SAD) signature appears at 306 to 329 (LVNPKQFNRIMRRREMRQQLEASG). A DNA-binding region (NFYA/HAP2-type) is located at residues 336 to 361 (QKYLHESRHLHALKRKRGLDGRFDNT). The disordered stretch occupies residues 344-414 (HLHALKRKRG…QPKGGIVNSS (71 aa)). Residues 353-362 (GLDGRFDNTK) are compositionally biased toward basic and acidic residues. The segment covering 363–375 (TAESSSMVSSTTS) has biased composition (low complexity).

Belongs to the NFYA/HAP2 subunit family. In terms of assembly, forms a heterotrimeric transcription factor complex (nfya-1-NF-Y complex) composed of nfya-1, nfyb-1 and nfyc-1, which binds to 5'-CCAAT-3' box motif in the promoters of its target genes. Interacts with the nfyb-1 and nfyc-1 dimer; the interaction is required for subsequent binding to the 5'-CCAAT-3' box motif in DNA. Does not interact with either nfyb-1 or nfyc-1 in their monomeric form. Interacts with mes-3. Expressed in certain parts of the gonads with high expression in fertilized oocytes in the uterus and mature oocytes from the distal to the proximal arm of the gonad, but weak expression in the syncytial ovaries and immature oocytes at the beginning of the proximal arm of the gonad. Highly expressed in the head ganglia neurons and the developing hermaphrodite vulva and male tail. Weakly expressed in most somatic cells. Not expressed in the intestine, the hypodermis, body wall muscle surrounding the pseudocoelomic space, secretory cells in the pharyngeal terminal bulb wall, in the small ganglia surrounding the pharynx and in the neurons running anteriorly to the sensory organs in the head.

It localises to the nucleus. Functionally, component of the sequence-specific heterotrimeric transcription factor (nfya-1-NF-Y) which specifically recognizes a 5'-CCAAT-3' box motif found in the promoters of its target genes to regulate their expression and control cellular identity in particular tissue types. In association with the components in the nfya-1-NF-Y complex, represses the expression of the T-box transcription factor tbx-2 throughout larval development, which most likely restricts its expression to certain tissues. May act to repress txb-2 expression in conjunction with tbx-2 itself, which has an autoregulatory role. With the components in this complex, negatively regulates the expression of the homeobox protein egl-5 to spatially restrict its expression in tissues such as the head. May regulate egl-5 expression in association with the mes-2-mes-3-mes-6 complex. The chain is Nuclear transcription factor Y subunit nfya-1 from Caenorhabditis elegans.